The chain runs to 99 residues: Malonate decarboxylase acyl carrier protein (99 aa).

Position 25 is an O-(phosphoribosyl dephospho-coenzyme A)serine (Ser-25).

Belongs to the MdcC family. In terms of processing, covalently binds the prosthetic group of malonate decarboxylase.

The protein localises to the cytoplasm. Subunit of malonate decarboxylase, it is an acyl carrier protein to which acetyl and malonyl thioester residues are bound via a 2'-(5''-phosphoribosyl)-3'-dephospho-CoA prosthetic group and turn over during the catalytic mechanism. This Pseudomonas putida (Arthrobacter siderocapsulatus) protein is Malonate decarboxylase acyl carrier protein.